We begin with the raw amino-acid sequence, 144 residues long: Large ribosomal subunit protein uL15 (144 aa).

Positions 1–53 (MYLNTLAPAEGAKHSAKRLGRGIGSGLGKTGGRGHKGQKSRTGGGVRRGFEGG) are disordered. Residues 21 to 31 (RGIGSGLGKTG) show a composition bias toward gly residues.

Belongs to the universal ribosomal protein uL15 family. Part of the 50S ribosomal subunit.

Functionally, binds to the 23S rRNA. The protein is Large ribosomal subunit protein uL15 of Mannheimia succiniciproducens (strain KCTC 0769BP / MBEL55E).